The primary structure comprises 346 residues: NADH-ubiquinone oxidoreductase chain 2 (346 aa).

11 helical membrane-spanning segments follow: residues 1–21, 25–45, 60–80, 95–115, 124–144, 149–169, 178–195, 200–219, 242–262, 274–294, and 326–346; these read MNPHATPVLVLSLALGTTITI, HWVLAWTGLEINTLAIIPLIS, FLTQAAASALVLFSSMTNAWA, CLLLTAAIAIKLGLVPFHFWF, LMTALLLSTLMKFPPLTLLLM, LNPALLTTMALASAALGGWMG, ILAFSSISHLGWIAIILV, LALLTFYLYTIMTSAVFMAL, ATLMLMLLSLAGLPPLTGFMP, EMTPAAMAIAMLSLLSLFFYL, and AILASLSILLLPLSPMVHAIV.

Belongs to the complex I subunit 2 family.

The protein localises to the mitochondrion inner membrane. The catalysed reaction is a ubiquinone + NADH + 5 H(+)(in) = a ubiquinol + NAD(+) + 4 H(+)(out). Its function is as follows. Core subunit of the mitochondrial membrane respiratory chain NADH dehydrogenase (Complex I) that is believed to belong to the minimal assembly required for catalysis. Complex I functions in the transfer of electrons from NADH to the respiratory chain. The immediate electron acceptor for the enzyme is believed to be ubiquinone. This chain is NADH-ubiquinone oxidoreductase chain 2 (MT-ND2), found in Mareca penelope (Eurasian wigeon).